A 359-amino-acid chain; its full sequence is Alanine racemase, biosynthetic (359 aa).

K34 serves as the catalytic Proton acceptor; specific for D-alanine. Position 34 is an N6-(pyridoxal phosphate)lysine (K34). Position 129 (R129) interacts with substrate. Residue Y255 is the Proton acceptor; specific for L-alanine of the active site. M303 provides a ligand contact to substrate.

The protein belongs to the alanine racemase family. Pyridoxal 5'-phosphate is required as a cofactor.

The enzyme catalyses L-alanine = D-alanine. Its pathway is amino-acid biosynthesis; D-alanine biosynthesis; D-alanine from L-alanine: step 1/1. It participates in cell wall biogenesis; peptidoglycan biosynthesis. Catalyzes the interconversion of L-alanine and D-alanine. Provides the D-alanine required for cell wall biosynthesis. The polypeptide is Alanine racemase, biosynthetic (alr) (Escherichia coli O157:H7).